We begin with the raw amino-acid sequence, 440 residues long: Suppressor of cytokine signaling 4 (440 aa).

Polar residues predominate over residues 1–10; that stretch reads MAENNENISK. The disordered stretch occupies residues 1-29; the sequence is MAENNENISKNVDVRPKTSRSRSADRKDG. The segment covering 12–29 has biased composition (basic and acidic residues); the sequence is VDVRPKTSRSRSADRKDG. An SH2 domain is found at 286–381; sequence CYWGVMDKYA…FFEPLLSTPL (96 aa). In terms of domain architecture, SOCS box spans 376–425; it reads LLSTPLIRTFPFSLQHICRTVICNCTTYDGIDALPIPSSMKLYLKEYHYK.

Its pathway is protein modification; protein ubiquitination. Functionally, SOCS family proteins form part of a classical negative feedback system that regulates cytokine signal transduction. Substrate-recognition component of a SCF-like ECS (Elongin BC-CUL2/5-SOCS-box protein) E3 ubiquitin-protein ligase complex which mediates the ubiquitination and subsequent proteasomal degradation of target proteins. Inhibits EGF signaling by mediating the degradation of the Tyr-phosphorylated EGF receptor/EGFR. This chain is Suppressor of cytokine signaling 4 (SOCS4), found in Homo sapiens (Human).